Consider the following 416-residue polypeptide: Multifunctional CCA protein (416 aa).

ATP is bound by residues Gly-8 and Arg-11. Residues Gly-8 and Arg-11 each contribute to the CTP site. Mg(2+) contacts are provided by Asp-21 and Asp-23. ATP contacts are provided by Arg-91, Arg-137, and Arg-140. Arg-91, Arg-137, and Arg-140 together coordinate CTP. In terms of domain architecture, HD spans 228 to 329; sequence TGLHTMLVLA…IKLFDKADFW (102 aa).

This sequence belongs to the tRNA nucleotidyltransferase/poly(A) polymerase family. Bacterial CCA-adding enzyme type 1 subfamily. In terms of assembly, monomer. Can also form homodimers and oligomers. The cofactor is Mg(2+). Requires Ni(2+) as cofactor.

The enzyme catalyses a tRNA precursor + 2 CTP + ATP = a tRNA with a 3' CCA end + 3 diphosphate. It catalyses the reaction a tRNA with a 3' CCA end + 2 CTP + ATP = a tRNA with a 3' CCACCA end + 3 diphosphate. Functionally, catalyzes the addition and repair of the essential 3'-terminal CCA sequence in tRNAs without using a nucleic acid template. Adds these three nucleotides in the order of C, C, and A to the tRNA nucleotide-73, using CTP and ATP as substrates and producing inorganic pyrophosphate. tRNA 3'-terminal CCA addition is required both for tRNA processing and repair. Also involved in tRNA surveillance by mediating tandem CCA addition to generate a CCACCA at the 3' terminus of unstable tRNAs. While stable tRNAs receive only 3'-terminal CCA, unstable tRNAs are marked with CCACCA and rapidly degraded. The protein is Multifunctional CCA protein of Shewanella sp. (strain ANA-3).